The primary structure comprises 365 residues: PHD finger protein 6 (365 aa).

Serine 2 carries the post-translational modification N-acetylserine. 2 consecutive short sequence motifs (nuclear localization signal) follow at residues 13 to 16 (RQRK) and 129 to 133 (RKHKK). The segment at 14 to 52 (QRKCGFCKSNRDKECGQLLISENQKVAAHHKCMLFSSAL) adopts a C2HC pre-PHD-type 1 zinc-finger fold. Positions 14-132 (QRKCGFCKSN…IYMVYCRKHK (119 aa)) are extended PHD1 domain (ePHD1). The PHD-type 1 zinc finger occupies 80–132 (LMCSLCHCPGATIGCDVKTCHRTYHYHCALHDKAQIREKPSQGIYMVYCRKHK). Residues serine 138, serine 145, and serine 155 each carry the phosphoserine modification. Positions 139 to 211 (EADLEESFNE…RSSPSDTRPK (73 aa)) are disordered. The Nucleolar localization signal motif lies at 157 to 169 (KSKKKSRKGRPRK). Basic residues predominate over residues 157 to 171 (KSKKKSRKGRPRKTN). Lysine 173 is covalently cross-linked (Glycyl lysine isopeptide (Lys-Gly) (interchain with G-Cter in SUMO2)). Residues serine 183 and serine 199 each carry the phosphoserine modification. The segment at 209 to 249 (RPKCGFCHVGEEENQARGKLHIFNAKKAAAHYKCMLFSSGT) adopts a C2HC pre-PHD-type 2 zinc-finger fold. Residues 209–330 (RPKCGFCHVG…IYKLYCKNHS (122 aa)) form an extended PHD2 domain (ePHD2) region. Lysine 227 participates in a covalent cross-link: Glycyl lysine isopeptide (Lys-Gly) (interchain with G-Cter in SUMO2). The PHD-type 2 zinc-finger motif lies at 278–330 (MKCTLCSQPGATIGCEIKACVKTYHYHCGVQDKAKYIENMSRGIYKLYCKNHS). Residues 330 to 365 (SGNDERDEEDEERESKSRGKVEIDQQQLTQQQLNGN) form a disordered region. Residues 342–352 (RESKSRGKVEI) show a composition bias toward basic and acidic residues. Over residues 354–365 (QQQLTQQQLNGN) the composition is skewed to low complexity. Phosphothreonine is present on threonine 358.

In terms of assembly, interacts with UBTF. Interacts with the NuRD complex component RBBP4 (via the nucleolar localization motif), the interaction mediates transcriptional repression activity.

It localises to the nucleus. Its subcellular location is the nucleolus. It is found in the chromosome. The protein localises to the centromere. The protein resides in the kinetochore. In terms of biological role, transcriptional regulator that associates with ribosomal RNA promoters and suppresses ribosomal RNA (rRNA) transcription. The chain is PHD finger protein 6 (PHF6) from Bos taurus (Bovine).